Reading from the N-terminus, the 196-residue chain is Lipoprotein signal peptidase (196 aa).

3 helical membrane-spanning segments follow: residues 43 to 63, 75 to 95, and 100 to 120; these read LMLK…GISF, AVFI…MVCS, and GFAG…DRLF. Active-site residues include Asp126 and Asp144. A helical transmembrane segment spans residues 135–155; it reads YSFPVFNLADCFITIGVIILI.

Belongs to the peptidase A8 family.

It localises to the cell inner membrane. It carries out the reaction Release of signal peptides from bacterial membrane prolipoproteins. Hydrolyzes -Xaa-Yaa-Zaa-|-(S,diacylglyceryl)Cys-, in which Xaa is hydrophobic (preferably Leu), and Yaa (Ala or Ser) and Zaa (Gly or Ala) have small, neutral side chains.. Its pathway is protein modification; lipoprotein biosynthesis (signal peptide cleavage). This protein specifically catalyzes the removal of signal peptides from prolipoproteins. This chain is Lipoprotein signal peptidase, found in Rickettsia canadensis (strain McKiel).